The following is a 373-amino-acid chain: 3 beta-hydroxysteroid dehydrogenase/Delta 5--&gt;4-isomerase type 1 (373 aa).

NADP(+) contacts are provided by residues 10-15 (GAGGFV), Tyr-155, and Lys-159. Lys-159 functions as the Proton donor in the catalytic mechanism. A helical transmembrane segment spans residues 288-308 (LPLLYWLAFLLETVSFLLRPV).

This sequence belongs to the 3-beta-HSD family. Steroidogenic tissues (includes testes, ovaries and adrenal glands).

It localises to the endoplasmic reticulum membrane. The protein resides in the mitochondrion membrane. The enzyme catalyses a 3beta-hydroxy-Delta(5)-steroid + NAD(+) = a 3-oxo-Delta(5)-steroid + NADH + H(+). It catalyses the reaction pregnenolone + NAD(+) = pregn-5-ene-3,20-dione + NADH + H(+). It carries out the reaction 3beta-hydroxyandrost-5-en-17-one + NAD(+) = androst-5-ene-3,17-dione + NADH + H(+). The catalysed reaction is androst-5-en-3beta,17beta-diol + NAD(+) = 17beta-hydroxy-androst-5-en-3-one + NADH + H(+). The enzyme catalyses a 3beta-hydroxysteroid + NADP(+) = a 3-oxosteroid + NADPH + H(+). It catalyses the reaction 5alpha-androstane-3beta,17beta-diol + NADP(+) = 17beta-hydroxy-5alpha-androstan-3-one + NADPH + H(+). It carries out the reaction 3beta-hydroxy-5alpha-androstan-17-one + NADP(+) = 5alpha-androstan-3,17-dione + NADPH + H(+). The catalysed reaction is a 3-oxo-Delta(5)-steroid = a 3-oxo-Delta(4)-steroid. The enzyme catalyses pregn-5-ene-3,20-dione = progesterone. It catalyses the reaction androst-5-ene-3,17-dione = androst-4-ene-3,17-dione. It carries out the reaction 17beta-hydroxy-androst-5-en-3-one = testosterone. The catalysed reaction is 5alpha-androstane-3beta,17beta-diol + NAD(+) = 17beta-hydroxy-5alpha-androstan-3-one + NADH + H(+). It functions in the pathway steroid hormone biosynthesis. Its pathway is steroid metabolism. A bifunctional enzyme responsible for the oxidation and isomerization of 3beta-hydroxy-Delta(5)-steroid precursors to 3-oxo-Delta(4)-steroids, an essential step in steroid hormone biosynthesis. Specifically catalyzes the conversion of pregnenolone to progesterone, 17alpha-hydroxypregnenolone to 17alpha-hydroxyprogesterone, dehydroepiandrosterone (DHEA) to 4-androstenedione, and androstenediol to testosterone. Additionally, catalyzes the interconversion between 3beta-hydroxy and 3-oxo-5alpha-androstane steroids controlling the bioavalability of the active forms. Specifically converts dihydrotestosterone to its inactive form 5alpha-androstanediol, that does not bind androgen receptor/AR. Also converts androstanedione, a precursor of testosterone and estrone, to epiandrosterone. Expected to use NAD(+) as preferred electron donor for the 3-beta-hydroxy-steroid dehydrogenase activity and NADPH for the 3-ketosteroid reductase activity. This chain is 3 beta-hydroxysteroid dehydrogenase/Delta 5--&gt;4-isomerase type 1, found in Mus musculus (Mouse).